A 127-amino-acid chain; its full sequence is Ribosome-binding factor A (127 aa).

This sequence belongs to the RbfA family. In terms of assembly, monomer. Binds 30S ribosomal subunits, but not 50S ribosomal subunits or 70S ribosomes.

It localises to the cytoplasm. Its function is as follows. One of several proteins that assist in the late maturation steps of the functional core of the 30S ribosomal subunit. Associates with free 30S ribosomal subunits (but not with 30S subunits that are part of 70S ribosomes or polysomes). Required for efficient processing of 16S rRNA. May interact with the 5'-terminal helix region of 16S rRNA. This Glaesserella parasuis serovar 5 (strain SH0165) (Haemophilus parasuis) protein is Ribosome-binding factor A.